Reading from the N-terminus, the 308-residue chain is Elongation factor Ts (308 aa).

The interval threonine 80–valine 83 is involved in Mg(2+) ion dislocation from EF-Tu.

The protein belongs to the EF-Ts family.

Its subcellular location is the cytoplasm. In terms of biological role, associates with the EF-Tu.GDP complex and induces the exchange of GDP to GTP. It remains bound to the aminoacyl-tRNA.EF-Tu.GTP complex up to the GTP hydrolysis stage on the ribosome. In Rhizobium rhizogenes (strain K84 / ATCC BAA-868) (Agrobacterium radiobacter), this protein is Elongation factor Ts.